Here is a 361-residue protein sequence, read N- to C-terminus: Molybdopterin synthase catalytic subunit (361 aa).

Residues 101-102 (HR), Lys117, and 124-126 (KKE) contribute to the substrate site.

This sequence belongs to the MoaE family. MOCS2B subfamily. Heterotetramer; composed of 2 small (Mocs2A) and 2 large (Mocs2B) subunits.

It is found in the cytoplasm. The enzyme catalyses 2 [molybdopterin-synthase sulfur-carrier protein]-C-terminal-Gly-aminoethanethioate + cyclic pyranopterin phosphate + H2O = molybdopterin + 2 [molybdopterin-synthase sulfur-carrier protein]-C-terminal Gly-Gly + 2 H(+). Its pathway is cofactor biosynthesis; molybdopterin biosynthesis. In terms of biological role, catalytic subunit of the molybdopterin synthase complex, a complex that catalyzes the conversion of precursor Z into molybdopterin. Acts by mediating the incorporation of 2 sulfur atoms from thiocarboxylated Mocs2A into precursor Z to generate a dithiolene group. The sequence is that of Molybdopterin synthase catalytic subunit from Drosophila persimilis (Fruit fly).